Consider the following 155-residue polypeptide: Microsomal glutathione S-transferase 1 (155 aa).

The Lumenal segment spans residues 3–9 (DLRQLMD). The chain crosses the membrane as a helical span at residues 10 to 33 (NEVLMAFTSYATIILTKMMFMSSA). The Cytoplasmic segment spans residues 34–62 (TAFQRITNKVFANPEDCAGFGKGENAKKF). A glutathione-binding site is contributed by R38. Residues K42, K55, and K60 each carry the N6-acetyllysine modification. The chain crosses the membrane as a helical span at residues 63 to 96 (VRTDEKVERVRRAHLNDLENIVPFLGIGLLYSLS). Glutathione-binding residues include R73, R74, H76, and E81. The Lumenal portion of the chain corresponds to 97 to 99 (GPD). Residues 100–123 (LSTALMHFRIFVGARIYHTIAYLT) form a helical membrane-spanning segment. Y121 contributes to the glutathione binding site. Residues 124–128 (PLPQP) lie on the Cytoplasmic side of the membrane. A helical membrane pass occupies residues 129 to 148 (NRGLAFFVGYGVTLSMAYRL). Topologically, residues 149–155 (LRSRLYL) are lumenal.

This sequence belongs to the MAPEG family. Homotrimer; The trimer binds only one molecule of glutathione. In terms of processing, acetylation of Lys-42 and Lys-55 is observed in liver mitochondria from fasted mice but not from fed mice. Expressed in the testes (at protein level).

The protein localises to the endoplasmic reticulum membrane. The protein resides in the mitochondrion outer membrane. It catalyses the reaction RX + glutathione = an S-substituted glutathione + a halide anion + H(+). Functionally, conjugation of reduced glutathione to a wide number of exogenous and endogenous hydrophobic electrophiles. The chain is Microsomal glutathione S-transferase 1 (Mgst1) from Mus musculus (Mouse).